Reading from the N-terminus, the 686-residue chain is DNA ligase (686 aa).

NAD(+) contacts are provided by residues 33–37, 82–83, and glutamate 122; these read DSVYD and SL. Lysine 124 (N6-AMP-lysine intermediate) is an active-site residue. The NAD(+) site is built by arginine 145, glutamate 182, lysine 300, and lysine 324. Zn(2+) contacts are provided by cysteine 418, cysteine 421, cysteine 436, and cysteine 441. Residues 600–686 enclose the BRCT domain; it reads AVSQILAGKK…PTVESGDLHP (87 aa).

It belongs to the NAD-dependent DNA ligase family. LigA subfamily. Mg(2+) serves as cofactor. It depends on Mn(2+) as a cofactor.

The catalysed reaction is NAD(+) + (deoxyribonucleotide)n-3'-hydroxyl + 5'-phospho-(deoxyribonucleotide)m = (deoxyribonucleotide)n+m + AMP + beta-nicotinamide D-nucleotide.. Its function is as follows. DNA ligase that catalyzes the formation of phosphodiester linkages between 5'-phosphoryl and 3'-hydroxyl groups in double-stranded DNA using NAD as a coenzyme and as the energy source for the reaction. It is essential for DNA replication and repair of damaged DNA. This Synechococcus sp. (strain JA-2-3B'a(2-13)) (Cyanobacteria bacterium Yellowstone B-Prime) protein is DNA ligase.